Reading from the N-terminus, the 277-residue chain is F-actin-capping protein subunit beta isoforms 1 and 2 (277 aa).

Residue Ser-2 is modified to N-acetylserine.

Belongs to the F-actin-capping protein beta subunit family. In terms of assembly, component of the F-actin capping complex, composed of a heterodimer of an alpha and a beta subunit. Component of the WASH complex. As to quaternary structure, component of the F-actin capping complex, composed of a heterodimer of an alpha and a beta subunit. Subunit of dynactin, a multiprotein complex part of a tripartite complex with dynein and a adapter, such as BICDL1, BICD2 or HOOK3. The dynactin complex is built around ACTR1A/ACTB filament and consists of an actin-related filament composed of a shoulder domain, a pointed end and a barbed end. Its length is defined by its flexible shoulder domain. As to expression, isoform 1 is detected in pectoral muscle, cardiac muscle and gizzard. Isoform 2 is detected in brain and liver (at protein level). Isoform 2 is the predominant isoform of nonmuscle tissues and isoform 1 is the predominant isoform of muscle tissues.

The protein localises to the cytoplasm. Its subcellular location is the myofibril. It is found in the sarcomere. It localises to the z line. The protein resides in the i band. The protein localises to the cytoskeleton. Its function is as follows. F-actin-capping proteins bind in a Ca(2+)-independent manner to the fast growing ends of actin filaments (barbed end) thereby blocking the exchange of subunits at these ends. Unlike other capping proteins (such as gelsolin and severin), these proteins do not sever actin filaments. May play a role in the regulation of cell morphology and cytoskeletal organization. In terms of biological role, forms, with CAPZB, the barbed end of the fast growing ends of actin filaments in the dynactin complex and stabilizes dynactin structure. The dynactin multiprotein complex activates the molecular motor dynein for ultra-processive transport along microtubules. This is F-actin-capping protein subunit beta isoforms 1 and 2 (CAPZB) from Gallus gallus (Chicken).